The following is a 374-amino-acid chain: MSDKLVWIDAQGSWNGAKEKVTGALESGANAVLVSPENVERVRELGKMTVAAAEGNPDIRVIGIGSEGDGTLFLPHDLNSSEDMATAKALKAQGTTTAAYVRLAGKEYEQFAARMGKLCDYLIIEGDDWKVIPLENLIAELGGSGTKILAKARDIDEASVALQTLEKGADGVLVDVDDPLKVREIARAVSTKQAGLGLTPVTITAVRDAGTGDRVCIDTCSLMTPGEGMLIGNQSSGLFLVQSEAEESPYVASRPFRVNAGAVHEYVLVGEKTRYLSELASGDPALIVTRDGDARKATIGRVKIERRPLLYVEAETGDRKISAILQNAETIKLVAADGSSTPVTALKPGDRVLAKLEKEARHFGMKIEETIVEK.

Belongs to the archaeal-type DHQ synthase family.

It catalyses the reaction 2-amino-2,3,7-trideoxy-D-lyxo-hept-6-ulosonate + NAD(+) + H2O = 3-dehydroquinate + NH4(+) + NADH + H(+). In terms of biological role, catalyzes the oxidative deamination and cyclization of 2-amino-3,7-dideoxy-D-threo-hept-6-ulosonic acid (ADH) to yield 3-dehydroquinate (DHQ), which is fed into the canonical shikimic pathway of aromatic amino acid biosynthesis. The chain is 3-dehydroquinate synthase from Methanocella arvoryzae (strain DSM 22066 / NBRC 105507 / MRE50).